We begin with the raw amino-acid sequence, 201 residues long: Small ribosomal subunit protein uS4 (201 aa).

The S4 RNA-binding domain maps to serine 91–aspartate 151.

Belongs to the universal ribosomal protein uS4 family. As to quaternary structure, part of the 30S ribosomal subunit. Contacts protein S5. The interaction surface between S4 and S5 is involved in control of translational fidelity.

One of the primary rRNA binding proteins, it binds directly to 16S rRNA where it nucleates assembly of the body of the 30S subunit. Its function is as follows. With S5 and S12 plays an important role in translational accuracy. In Corynebacterium kroppenstedtii (strain DSM 44385 / JCM 11950 / CIP 105744 / CCUG 35717), this protein is Small ribosomal subunit protein uS4.